A 132-amino-acid polypeptide reads, in one-letter code: Large ribosomal subunit protein uL14 (132 aa).

This sequence belongs to the universal ribosomal protein uL14 family. Part of the 50S ribosomal subunit. Forms a cluster with proteins L3 and L24e, part of which may contact the 16S rRNA in 2 intersubunit bridges.

In terms of biological role, binds to 23S rRNA. Forms part of two intersubunit bridges in the 70S ribosome. The sequence is that of Large ribosomal subunit protein uL14 from Methanospirillum hungatei JF-1 (strain ATCC 27890 / DSM 864 / NBRC 100397 / JF-1).